A 329-amino-acid polypeptide reads, in one-letter code: uncharacterized protein (329 aa).

2 consecutive transmembrane segments (helical) span residues 13–35 (IPVL…WATI) and 229–248 (VIPA…SVVY).

It is found in the cell membrane. This is an uncharacterized protein from Archaeoglobus fulgidus (strain ATCC 49558 / DSM 4304 / JCM 9628 / NBRC 100126 / VC-16).